We begin with the raw amino-acid sequence, 121 residues long: Non-specific lipid-transfer protein 3 (121 aa).

Positions 1-28 are cleaved as a signal peptide; sequence MAGARRTMALVALVAVVAAAVVAERASA. Intrachain disulfides connect C32/C80, C42/C57, C58/C103, and C78/C117.

The protein belongs to the plant LTP family.

Plant non-specific lipid-transfer proteins transfer phospholipids as well as galactolipids across membranes. May play a role in wax or cutin deposition in the cell walls of expanding epidermal cells and certain secretory tissues. May possess an antifungal activity and protect the plant against pathogens. In Oryza sativa subsp. indica (Rice), this protein is Non-specific lipid-transfer protein 3 (LTP110-A).